Reading from the N-terminus, the 358-residue chain is Type II restriction enzyme CviJI (358 aa).

Mg(2+) is required as a cofactor.

The enzyme catalyses Endonucleolytic cleavage of DNA to give specific double-stranded fragments with terminal 5'-phosphates.. A P subtype restriction enzyme that recognizes the double-stranded sequence 5'-RGCY-3' and cleaves after G-2. In the presence of ATP, there is a relaxation of its specificity and it can cleave 5'-RGCN-3' and 5'-YGCY-3', but not 5'-YGCR-3' (R.CviJI* activity). The polypeptide is Type II restriction enzyme CviJI (Paramecium bursaria Chlorella virus IL3A (PBCV-IL3A)).